The primary structure comprises 408 residues: Probable pectate lyase 5 (408 aa).

Positions 1 to 27 (MRMTLVHLSLSLFSCLLLVLSPTFIAS) are cleaved as a signal peptide. Asparagine 45 carries N-linked (GlcNAc...) asparagine glycosylation. Residues aspartate 206, aspartate 230, and aspartate 234 each coordinate Ca(2+). Residue arginine 286 is part of the active site.

Belongs to the polysaccharide lyase 1 family. The cofactor is Ca(2+).

It catalyses the reaction Eliminative cleavage of (1-&gt;4)-alpha-D-galacturonan to give oligosaccharides with 4-deoxy-alpha-D-galact-4-enuronosyl groups at their non-reducing ends.. Its pathway is glycan metabolism; pectin degradation; 2-dehydro-3-deoxy-D-gluconate from pectin: step 2/5. The sequence is that of Probable pectate lyase 5 from Arabidopsis thaliana (Mouse-ear cress).